Consider the following 24-residue polypeptide: Brevinin-1Bc (24 aa).

An intrachain disulfide couples Cys-18 to Cys-24.

Expressed by the skin glands.

It localises to the secreted. Functionally, antibacterial activity against Gram-positive bacterium S.aureus. The protein is Brevinin-1Bc of Lithobates berlandieri (Rio Grande leopard frog).